Consider the following 441-residue polypeptide: tRNA-2-methylthio-N(6)-dimethylallyladenosine synthase (441 aa).

Residues 5 to 120 (KLLYIETFGC…LPEMVRAAEQ (116 aa)) form the MTTase N-terminal domain. Residues Cys14, Cys50, Cys83, Cys158, Cys162, and Cys165 each contribute to the [4Fe-4S] cluster site. In terms of domain architecture, Radical SAM core spans 144–374 (EGGGVTRFVT…QGLQRDMTIE (231 aa)). One can recognise a TRAM domain in the interval 377–439 (AGFVGTCQAV…PNSLLGELAV (63 aa)).

This sequence belongs to the methylthiotransferase family. MiaB subfamily. In terms of assembly, monomer. Requires [4Fe-4S] cluster as cofactor.

The protein resides in the cytoplasm. It carries out the reaction N(6)-dimethylallyladenosine(37) in tRNA + (sulfur carrier)-SH + AH2 + 2 S-adenosyl-L-methionine = 2-methylsulfanyl-N(6)-dimethylallyladenosine(37) in tRNA + (sulfur carrier)-H + 5'-deoxyadenosine + L-methionine + A + S-adenosyl-L-homocysteine + 2 H(+). Its function is as follows. Catalyzes the methylthiolation of N6-(dimethylallyl)adenosine (i(6)A), leading to the formation of 2-methylthio-N6-(dimethylallyl)adenosine (ms(2)i(6)A) at position 37 in tRNAs that read codons beginning with uridine. The protein is tRNA-2-methylthio-N(6)-dimethylallyladenosine synthase of Geobacter metallireducens (strain ATCC 53774 / DSM 7210 / GS-15).